The sequence spans 254 residues: Ribosomal RNA small subunit methyltransferase J (254 aa).

S-adenosyl-L-methionine is bound by residues 107–108, 123–124, and D174; these read RD and ER.

Belongs to the methyltransferase superfamily. RsmJ family.

The protein localises to the cytoplasm. It catalyses the reaction guanosine(1516) in 16S rRNA + S-adenosyl-L-methionine = N(2)-methylguanosine(1516) in 16S rRNA + S-adenosyl-L-homocysteine + H(+). Functionally, specifically methylates the guanosine in position 1516 of 16S rRNA. The protein is Ribosomal RNA small subunit methyltransferase J of Coxiella burnetii (strain Dugway 5J108-111).